A 48-amino-acid polypeptide reads, in one-letter code: Large ribosomal subunit protein eL40 (48 aa).

Belongs to the eukaryotic ribosomal protein eL40 family.

The polypeptide is Large ribosomal subunit protein eL40 (Methanoregula boonei (strain DSM 21154 / JCM 14090 / 6A8)).